A 586-amino-acid chain; its full sequence is Membrane protein insertase YidC (586 aa).

5 helical membrane passes run 5–25 (TLIGLVLIALIMMAWFQLMAP), 371–391 (GVIIILFALFIKLVTYPLTMA), 436–456 (LGGCLPTVIQMPLLFAMFYVF), 486–506 (IPLYGDHVSVIPILMGVAVFF), and 522–542 (FMMYLFPGMMLIFFNNMPSGL).

The protein belongs to the OXA1/ALB3/YidC family. Type 1 subfamily. Interacts with the Sec translocase complex via SecD. Specifically interacts with transmembrane segments of nascent integral membrane proteins during membrane integration.

It localises to the cell inner membrane. Its function is as follows. Required for the insertion and/or proper folding and/or complex formation of integral membrane proteins into the membrane. Involved in integration of membrane proteins that insert both dependently and independently of the Sec translocase complex, as well as at least some lipoproteins. Aids folding of multispanning membrane proteins. The polypeptide is Membrane protein insertase YidC (Chloroherpeton thalassium (strain ATCC 35110 / GB-78)).